Reading from the N-terminus, the 414-residue chain is Serine/threonine transporter SstT (414 aa).

At 2–15 (TTQRSPGLFRRLAH) the chain is on the cytoplasmic side. A helical transmembrane segment spans residues 16–36 (GSLVKQILVGLVLGILLAWIS). Residues 37–45 (KPAAEAVGL) lie on the Periplasmic side of the membrane. The chain crosses the membrane as a helical span at residues 46-66 (LGTLFVGALKAVAPILVLMLV). The Cytoplasmic portion of the chain corresponds to 67 to 83 (MASIANHQHGQKTNIRP). Residues 84–104 (ILFLYLLGTFSAALAAVVFSF) traverse the membrane as a helical segment. Over 105–142 (AFPSTLHLSSSAGDISPPSGIVEVMRGLVMSMVSNPID) the chain is Periplasmic. A helical transmembrane segment spans residues 143 to 163 (ALLKGNYIGILVWAIGLGFAL). The Cytoplasmic portion of the chain corresponds to 164–179 (RHGNETTKNLVNDLSN). Residues 180-200 (AVTFMVKLVIRFAPIGIFGLV) traverse the membrane as a helical segment. Residues 201–217 (SSTLATTGFSTLWGYAQ) lie on the Periplasmic side of the membrane. A helical membrane pass occupies residues 218-238 (LLVVLVGCMLLVALVVNPLLV). At 239-299 (WWKIRRNPFP…VSIPLGATIN (61 aa)) the chain is on the cytoplasmic side. The chain crosses the membrane as a helical span at residues 300–320 (MAGAAITITVLTLAAVNTLGI). At 321–331 (PVDLPTALLLS) the chain is on the periplasmic side. Residues 332-352 (VVASLCACGASGVAGGSLLLI) traverse the membrane as a helical segment. Over 353-414 (PLACNMFGIS…DRLANSALRN (62 aa)) the chain is Cytoplasmic.

It belongs to the dicarboxylate/amino acid:cation symporter (DAACS) (TC 2.A.23) family.

It localises to the cell inner membrane. The enzyme catalyses L-serine(in) + Na(+)(in) = L-serine(out) + Na(+)(out). The catalysed reaction is L-threonine(in) + Na(+)(in) = L-threonine(out) + Na(+)(out). In terms of biological role, involved in the import of serine and threonine into the cell, with the concomitant import of sodium (symport system). This chain is Serine/threonine transporter SstT, found in Shigella boydii serotype 4 (strain Sb227).